A 398-amino-acid polypeptide reads, in one-letter code: Elongation factor Tu (398 aa).

Residues 10 to 207 enclose the tr-type G domain; it reads KIHLNVGTIG…ILDKNIPVPN (198 aa). A G1 region spans residues 19-26; the sequence is GHVDHGKT. GTP is bound at residue 19 to 26; it reads GHVDHGKT. T26 is a Mg(2+) binding site. A G2 region spans residues 60–64; sequence GITIS. Residues 81-84 are G3; the sequence is DCPG. GTP contacts are provided by residues 81–85 and 136–139; these read DCPGH and NKAD. The tract at residues 136 to 139 is G4; sequence NKAD. Residues 174 to 176 form a G5 region; that stretch reads SAL.

This sequence belongs to the TRAFAC class translation factor GTPase superfamily. Classic translation factor GTPase family. EF-Tu/EF-1A subfamily. In terms of assembly, monomer.

The protein localises to the cytoplasm. The enzyme catalyses GTP + H2O = GDP + phosphate + H(+). Its function is as follows. GTP hydrolase that promotes the GTP-dependent binding of aminoacyl-tRNA to the A-site of ribosomes during protein biosynthesis. The protein is Elongation factor Tu of Carsonella ruddii (strain PV).